We begin with the raw amino-acid sequence, 1677 residues long: Vitellogenin (1677 aa).

The signal sequence occupies residues 1-8 (LTIALVGS). One can recognise a Vitellogenin domain in the interval 17–655 (FSGSKTYQYK…NAASILPSAV (639 aa)). Disordered stretches follow at residues 1089 to 1232 (TLRG…SEEI) and 1252 to 1280 (FQNKRGRMSSSSSSSSSSSSQSTLNSKQD). Low complexity predominate over residues 1098 to 1122 (SSSSSSSSSSSSSSSSSSSSSSQQS). The span at 1123-1145 (RMEKRMEQDKLTENLERDRDHMR) shows a compositional bias: basic and acidic residues. Positions 1169-1196 (SSSSSSSSSSSGSNSSSSSSSSSSSSSR) are enriched in low complexity. N-linked (GlcNAc...) asparagine glycans are attached at residues Asn1182, Asn1202, Asn1217, and Asn1218. Positions 1197-1212 (SHNHRNNTRTLSKSKR) are enriched in basic residues. 2 stretches are compositionally biased toward low complexity: residues 1215-1229 (NNNNSSSSSGSSSSS) and 1260-1273 (SSSSSSSSSSSSQS). The VWFD domain maps to 1490–1675 (SKCVAQENKF…TATEAASFCV (186 aa)). Intrachain disulfides connect Cys1492–Cys1631 and Cys1515–Cys1674. The span at 1636-1649 (GERRKEFRMPDGRQ) shows a compositional bias: basic and acidic residues. The disordered stretch occupies residues 1636–1659 (GERRKEFRMPDGRQARGPSVSPTP).

Phosvitin, an egg yolk storage protein, is one of the most highly phosphorylated (10%) proteins in nature. In terms of tissue distribution, found in liver, testis and undifferentiated gonads of estrogen-treated fish. Not detected in the brain and spleen.

Its function is as follows. Precursor of the major egg-yolk proteins that are sources of nutrients during early development of oviparous organisms. The protein is Vitellogenin of Acipenser transmontanus (White sturgeon).